The sequence spans 339 residues: DNA-directed RNA polymerase subunit alpha (339 aa).

The alpha N-terminal domain (alpha-NTD) stretch occupies residues 1–233; that stretch reads MVREEVAGST…DLFLPFLHAE (233 aa). An alpha C-terminal domain (alpha-CTD) region spans residues 266 to 339; it reads GIPLNCIFID…IDLLKNKLSF (74 aa).

Belongs to the RNA polymerase alpha chain family. As to quaternary structure, in plastids the minimal PEP RNA polymerase catalytic core is composed of four subunits: alpha, beta, beta', and beta''. When a (nuclear-encoded) sigma factor is associated with the core the holoenzyme is formed, which can initiate transcription.

It localises to the plastid. It is found in the chloroplast. The enzyme catalyses RNA(n) + a ribonucleoside 5'-triphosphate = RNA(n+1) + diphosphate. Its function is as follows. DNA-dependent RNA polymerase catalyzes the transcription of DNA into RNA using the four ribonucleoside triphosphates as substrates. The chain is DNA-directed RNA polymerase subunit alpha from Hordeum bulbosum (Bulbous barley).